Here is a 248-residue protein sequence, read N- to C-terminus: uncharacterized protein (248 aa).

Residues 30 to 50 (LIALAIFIGLIAIFMFGCKAA) form a helical membrane-spanning segment. Disordered regions lie at residues 59–91 (NRDTTQSDTDVIYPRDDPRASRSHQNFGFMDPP) and 208–248 (TTES…VSTR). Composition is skewed to polar residues over residues 210-220 (ESPAPAQSTSN) and 239-248 (SLHNETVSTR).

Its subcellular location is the membrane. This is an uncharacterized protein from Caenorhabditis elegans.